The primary structure comprises 998 residues: 2-imino-3-(indol-3-yl)propanoate dimerase (998 aa).

It catalyses the reaction 2 H2O2 = O2 + 2 H2O. The catalysed reaction is 2 2-iminio-3-(indol-3-yl)propanoate + H2O2 = indole-3-pyruvate imine dimer + 2 H2O. Its pathway is pigment biosynthesis; violacein biosynthesis. Functionally, catalyzes the hydrogen peroxide-dependent dimerization of two L-tryptophan-derived molecules (imine form of indole 3-pyruvate (IPA)), to form an uncharacterized product suggested to be indole-3-pyruvate imine dimer that can spontaneously convert into dichlorochromopyrrolate (CPA). The uncharacterized product is the substrate of VioE. This Chromobacterium violaceum (strain ATCC 12472 / DSM 30191 / JCM 1249 / CCUG 213 / NBRC 12614 / NCIMB 9131 / NCTC 9757 / MK) protein is 2-imino-3-(indol-3-yl)propanoate dimerase (vioB).